Consider the following 111-residue polypeptide: Large ribosomal subunit protein uL23 (111 aa).

It belongs to the universal ribosomal protein uL23 family. In terms of assembly, part of the 50S ribosomal subunit. Contacts protein L29, and trigger factor when it is bound to the ribosome.

One of the early assembly proteins it binds 23S rRNA. One of the proteins that surrounds the polypeptide exit tunnel on the outside of the ribosome. Forms the main docking site for trigger factor binding to the ribosome. This chain is Large ribosomal subunit protein uL23, found in Nitrosomonas eutropha (strain DSM 101675 / C91 / Nm57).